Here is a 160-residue protein sequence, read N- to C-terminus: MAGVLRSVFQRPPGRLQTVKKGAESLIGTEWIRHKFTRSRIPDKVFQPRPEDHEKYGGDPQNPHKLHIVTRIRSTKRRPYWEKDTIKMLGLQKAHSPQIHKNIPSVNAKLKVVKHLIRIQPLKLPQGLPTEETMSSTCLKSTGELVVQWHLKPVEQEAKS.

The transit peptide at 1-34 (MAGVLRSVFQRPPGRLQTVKKGAESLIGTEWIRH) directs the protein to the mitochondrion. The interval 45–64 (VFQPRPEDHEKYGGDPQNPH) is disordered.

This sequence belongs to the universal ribosomal protein uL30 family. In terms of assembly, component of the mitochondrial ribosome large subunit (39S) which comprises a 16S rRNA and about 50 distinct proteins.

The protein resides in the mitochondrion. The protein is Large ribosomal subunit protein uL30m (Mrpl30) of Rattus norvegicus (Rat).